A 549-amino-acid chain; its full sequence is DNA 3'-5' helicase XPB (549 aa).

Positions 1-130 (MTDGPLIVQS…RNKKIAPMLG (130 aa)) are required for protein stability or solubility. A Helicase ATP-binding domain is found at 190 to 344 (ADSFWAGGSG…DVFSLIGPKR (155 aa)). 203-210 (LPCGAGKT) contributes to the ATP binding site. A DEAH box motif is present at residues 298 to 301 (DEVH). In terms of domain architecture, Helicase C-terminal spans 399–545 (VVKSILAKHP…YIIRDADDLL (147 aa)).

This sequence belongs to the helicase family. RAD25/XPB subfamily. Monomer. The cofactor is Mn(2+). Mg(2+) serves as cofactor.

It catalyses the reaction Couples ATP hydrolysis with the unwinding of duplex DNA by translocating in the 3'-5' direction.. The catalysed reaction is ATP + H2O = ADP + phosphate + H(+). Functionally, ATP-dependent 3'-5' DNA helicase, unwinds 3'-overhangs, 3'- flaps, and splayed-arm DNA substrates but not 5'-overhangs, 5'-flap substrates, 3-way junctions or Holliday junctions. Not highly efficient in vitro. Requires ATP hydrolysis for helicase activity; the ATPase activity is DNA-dependent and requires a minimum of 4 single-stranded nucleotides (nt) with 6-10 nt providing all necessary interactions for full processive unwinding. The ATPase prefers ATP over CTP or GTP, is almost inactive with TTP. DNA helicase activity requires ATP or dATP and only acts when the 3'-overhang is &gt;20 nt. Capable of unwinding a DNA:RNA hybrid if the 3'-overhang is DNA. Also catalyzes ATP-independent annealing of complementary DNA strands; annealing requires Mg(2+). The chain is DNA 3'-5' helicase XPB from Mycobacterium tuberculosis (strain ATCC 25618 / H37Rv).